We begin with the raw amino-acid sequence, 193 residues long: MGGEKAFSFIFLLFLCFFLANLSASSAHPPRQKLKQRIPCKQLVLYFHDVVYNGHNKANATASIVGAPQGADLVKLAGENHFGNVVVFDDPITLDNNFHSPPVGRAQGLYVYDKKDTFHSWLSFSFTLNTTMHQGTLIFMGADPILIKNRDITVVGGTGDFFMARGIATIATDSYEGEVYFRLKVDIKLYECW.

Residues 1–29 form the signal peptide; sequence MGGEKAFSFIFLLFLCFFLANLSASSAHP. Cys40 and Cys192 form a disulfide bridge. N-linked (GlcNAc...) asparagine glycans are attached at residues Asn59 and Asn129.

It belongs to the plant dirigent protein family. As to quaternary structure, homodimer. In terms of tissue distribution, expressed in rhizomes, stems, and leaves.

Its subcellular location is the secreted. It localises to the extracellular space. The protein localises to the apoplast. It functions in the pathway aromatic compound metabolism; phenylpropanoid biosynthesis. In terms of biological role, dirigent proteins impart stereoselectivity on the phenoxy radical-coupling reaction, yielding optically active lignans from two molecules of coniferyl alcohol in the biosynthesis of lignans, flavonolignans, and alkaloids and thus plays a central role in plant secondary metabolism. Also involved in the biosynthesis of etoposide, a chemotherapeutic compound of the topoisomerase inhibitor family. The protein is Dirigent protein of Sinopodophyllum hexandrum (Himalayan may apple).